Here is a 310-residue protein sequence, read N- to C-terminus: Atrochrysone carboxyl ACP thioesterase CPUR_05436 (310 aa).

Positions 105, 107, 109, and 110 each coordinate Zn(2+). The Proton donor/acceptor role is filled by Asp-109.

It belongs to the metallo-beta-lactamase superfamily. It depends on Zn(2+) as a cofactor.

The catalysed reaction is atrochrysone carboxyl-[ACP] + H2O = atrochrysone carboxylate + holo-[ACP] + H(+). Its pathway is pigment biosynthesis. Functionally, atrochrysone carboxyl ACP thioesterase; part of the ergochrome gene cluster responsible for the typical purple-black color of the ergot sclerotia. The ergochrome gene cluster produces several ergot pigments including the yellow ergochrome secalonic acid and its derivatives, as well as the red anthraquinones endocrocin and clavorubin. The pathway begins with the synthesis of atrochrysone thioester by the polyketide synthase (PKS) CPUR_05437. The atrochrysone carboxyl ACP thioesterase CPUR_05436 then breaks the thioester bond and releases the atrochrysone carboxylic acid from CPUR_05437. The atrochrysone carboxylic acid is then converted to atrochrysone which is further transformed into emodin anthrone. The next step is performed by the anthrone oxygenase CPUR_05434 that catalyzes the oxidation of emodinanthrone to emodin. Emodin is further modified to yield monodictyphenone via several steps involving CPUR_05427, CPUR_05428, CPUR_05429 and CPUR_05430. The short chain dehydrogenase/reductase CPUR_05418 then catalyzes the C-5 ketoreduction to give the xanthone skeleton of the monomeric units. Ergochromes formation requires further dimerization steps of different xanthone units, probably catalyzed by the cytochrome P450 monooxygenase CPUR_05419. CPUR_05425, CPUR_05426 and CPUR_05431 are unique to Claviceps, thus it is likely that they are involved in further modification of xanthone units or in their dimerization. The yellow ergochromes and the red anthraquinone pigments endocrocin and clavorubin are products from the same PKS derived precursors and the latter are likely shunt products in the pathway of xanthone biosynthesis. It is proposed that atrochrysone carboxylic acid released from the PKS CPUR_05437 can also be converted to endocrocin anthrone which is further oxidized into endocrocin by CPUR_05435. Endocrocin could be then modified to clavorubin, possibly by CPUR_05423 and CPUR_05431. Clavorubin is the principal anthraquinone metabolite produced by the cluster with a much higher yield compared to endocrocin. In Claviceps purpurea (strain 20.1) (Ergot fungus), this protein is Atrochrysone carboxyl ACP thioesterase CPUR_05436.